Here is a 254-residue protein sequence, read N- to C-terminus: 5'-nucleotidase SurE (254 aa).

A divalent metal cation contacts are provided by Asp8, Asp9, Ser39, and Asn91.

The protein belongs to the SurE nucleotidase family. A divalent metal cation is required as a cofactor.

The protein resides in the cytoplasm. The catalysed reaction is a ribonucleoside 5'-phosphate + H2O = a ribonucleoside + phosphate. Functionally, nucleotidase that shows phosphatase activity on nucleoside 5'-monophosphates. The chain is 5'-nucleotidase SurE from Pseudoalteromonas translucida (strain TAC 125).